We begin with the raw amino-acid sequence, 868 residues long: Monofunctional pimaradiene synthase (868 aa).

The Mg(2+) site is built by Asp620, Asp624, Asn764, Thr768, and Glu772.

The protein belongs to the terpene synthase family. Tpsd subfamily. It depends on Mg(2+) as a cofactor.

The enzyme catalyses (+)-copalyl diphosphate = (-)-pimara-8(14),15-diene + diphosphate. It participates in terpene metabolism; oleoresin biosynthesis. Functionally, involved in defensive oleoresin formation in conifers in response to insect attack or other injury. Involved in diterpene (C20) olefins biosynthesis. Monofunctional enzyme lacking the DXDD motif in the class II active site relevant for the cyclization of geranylgeranyl diphosphate (GGPP). Requires (+)-copalyl diphosphate ((+)-CPP) as substrate, but no activity with GGPP or ent-CPP. Pimaradiene is the major products of the enzyme. The sequence is that of Monofunctional pimaradiene synthase from Pinus banksiana (Jack pine).